The following is a 368-amino-acid chain: Flagellar P-ring protein 1 (368 aa).

The N-terminal stretch at 1–24 is a signal peptide; it reads MIFKQIRRLIAAALLAALSLPAAA.

Belongs to the FlgI family. As to quaternary structure, the basal body constitutes a major portion of the flagellar organelle and consists of four rings (L,P,S, and M) mounted on a central rod.

The protein resides in the periplasm. The protein localises to the bacterial flagellum basal body. Functionally, assembles around the rod to form the L-ring and probably protects the motor/basal body from shearing forces during rotation. The polypeptide is Flagellar P-ring protein 1 (Chromobacterium violaceum (strain ATCC 12472 / DSM 30191 / JCM 1249 / CCUG 213 / NBRC 12614 / NCIMB 9131 / NCTC 9757 / MK)).